Here is a 466-residue protein sequence, read N- to C-terminus: Asparagine--tRNA ligase (466 aa).

Belongs to the class-II aminoacyl-tRNA synthetase family. As to quaternary structure, homodimer.

Its subcellular location is the cytoplasm. It catalyses the reaction tRNA(Asn) + L-asparagine + ATP = L-asparaginyl-tRNA(Asn) + AMP + diphosphate + H(+). This Photobacterium profundum (strain SS9) protein is Asparagine--tRNA ligase.